Here is a 496-residue protein sequence, read N- to C-terminus: Cytochrome P450 71D179 (496 aa).

The helical; Signal-anchor for type II membrane protein transmembrane segment at 1–21 (MDISISWVVIIVSVLSYLILM) threads the bilayer. Residue C435 participates in heme binding.

The protein belongs to the cytochrome P450 family. Heme is required as a cofactor.

Its subcellular location is the membrane. It functions in the pathway secondary metabolite biosynthesis; terpenoid biosynthesis. Its function is as follows. Involved in the biosynthesis of phenolic monoterpenes natural products thymol and carvacrol which have a broad range of biological activities acting as antimicrobial compounds, insecticides, antioxidants and pharmaceutical agents. Catalyzes probably the C3-hydroxylation of gamma-terpinene to produce thymol. The chain is Cytochrome P450 71D179 from Thymus vulgaris (Thyme).